The chain runs to 406 residues: Probable 26S proteasome regulatory subunit 10B (406 aa).

An ATP-binding site is contributed by 191–198 (GPPGTGKT).

Belongs to the AAA ATPase family.

The protein resides in the cytoplasm. The protein localises to the nucleus. Functionally, the 26S proteasome is involved in the ATP-dependent degradation of ubiquitinated proteins. The regulatory (or ATPase) complex confers ATP dependency and substrate specificity to the 26S complex. The sequence is that of Probable 26S proteasome regulatory subunit 10B (rpt-4) from Caenorhabditis elegans.